We begin with the raw amino-acid sequence, 269 residues long: 2-dehydro-3-deoxyphosphooctonate aldolase (269 aa).

It belongs to the KdsA family.

It localises to the cytoplasm. The catalysed reaction is D-arabinose 5-phosphate + phosphoenolpyruvate + H2O = 3-deoxy-alpha-D-manno-2-octulosonate-8-phosphate + phosphate. It functions in the pathway carbohydrate biosynthesis; 3-deoxy-D-manno-octulosonate biosynthesis; 3-deoxy-D-manno-octulosonate from D-ribulose 5-phosphate: step 2/3. It participates in bacterial outer membrane biogenesis; lipopolysaccharide biosynthesis. The chain is 2-dehydro-3-deoxyphosphooctonate aldolase from Chlamydia abortus (strain DSM 27085 / S26/3) (Chlamydophila abortus).